Reading from the N-terminus, the 213-residue chain is UPF0329 protein ECU04_0110 (213 aa).

It belongs to the UPF0329 family.

The polypeptide is UPF0329 protein ECU04_0110 (Encephalitozoon cuniculi (strain GB-M1) (Microsporidian parasite)).